The primary structure comprises 326 residues: MAFTPFPPRQPTASARLPLTLMTLDDWALATITGADSEKYMQGQVTADVSQMTEDQHLLAAHCDAKGKMWSNLRLFRDGDGFAWIERRSVREPQLTELKKYAVFSKVTIAPDDERVLLGVAGFQARAALANLFSELPSREKQVVKEGATTLLWFEHPAERFLIVTDEATANMLTDKLRGEAELNNSQQWLALNIEAGFPVIDAANSGQFIPQATNLQALGGISFKKGCYTGQEMVARAKFRGANKRALWLLKGSASRLPEAGEDLELKMGENWRRTGTVLAAVKLEDGQVVVQVVMNNDMEPDSIFRVRDDANTLRIEPLPYSLEE.

2 residues coordinate folate: Trp27 and Trp189.

Belongs to the tRNA-modifying YgfZ family.

Its subcellular location is the cytoplasm. Functionally, folate-binding protein involved in regulating the level of ATP-DnaA and in the modification of some tRNAs. It is probably a key factor in regulatory networks that act via tRNA modification, such as initiation of chromosomal replication. The polypeptide is tRNA-modifying protein YgfZ (Escherichia coli O45:K1 (strain S88 / ExPEC)).